Here is a 469-residue protein sequence, read N- to C-terminus: Glutamate--tRNA ligase (469 aa).

Positions proline 11–asparagine 21 match the 'HIGH' region motif. Residues proline 121–proline 131 show a composition bias toward basic and acidic residues. Residues proline 121 to glycine 141 form a disordered region. A 'KMSKS' region motif is present at residues lysine 243–arginine 247. Lysine 246 contacts ATP.

Belongs to the class-I aminoacyl-tRNA synthetase family. Glutamate--tRNA ligase type 1 subfamily. In terms of assembly, monomer.

The protein localises to the cytoplasm. It catalyses the reaction tRNA(Glu) + L-glutamate + ATP = L-glutamyl-tRNA(Glu) + AMP + diphosphate. In terms of biological role, catalyzes the attachment of glutamate to tRNA(Glu) in a two-step reaction: glutamate is first activated by ATP to form Glu-AMP and then transferred to the acceptor end of tRNA(Glu). The polypeptide is Glutamate--tRNA ligase (Burkholderia multivorans (strain ATCC 17616 / 249)).